An 81-amino-acid polypeptide reads, in one-letter code: UPF0180 protein RBAM_013970 (81 aa).

The protein belongs to the UPF0180 family.

The protein is UPF0180 protein RBAM_013970 of Bacillus velezensis (strain DSM 23117 / BGSC 10A6 / LMG 26770 / FZB42) (Bacillus amyloliquefaciens subsp. plantarum).